Here is a 115-residue protein sequence, read N- to C-terminus: Large ribosomal subunit protein P1 (115 aa).

Residues 56–73 (QAAAAPVPASGGAAAPAE) are compositionally biased toward low complexity. The disordered stretch occupies residues 56-115 (QAAAAPVPASGGAAAPAEGDADEADEADEEAEEEAADDGGDDDDDEDDEASGEGLGELFG). Positions 74 to 106 (GDADEADEADEEAEEEAADDGGDDDDDEDDEAS) are enriched in acidic residues.

This sequence belongs to the eukaryotic ribosomal protein P1/P2 family. In terms of assembly, part of the 50S ribosomal subunit. Homodimer, it forms part of the ribosomal stalk which helps the ribosome interact with GTP-bound translation factors. Forms a heptameric uL10/P0(P1)2(P1)2(P1)2 complex, where uL10/P0 forms an elongated spine to which the P1 dimers bind in a sequential fashion.

In terms of biological role, forms part of the ribosomal stalk, playing a central role in the interaction of the ribosome with GTP-bound translation factors. In Haloarcula marismortui (strain ATCC 43049 / DSM 3752 / JCM 8966 / VKM B-1809) (Halobacterium marismortui), this protein is Large ribosomal subunit protein P1.